Reading from the N-terminus, the 244-residue chain is tRNA (guanine-N(1)-)-methyltransferase (244 aa).

S-adenosyl-L-methionine-binding positions include glycine 112 and 131 to 136 (IGDFIV).

The protein belongs to the RNA methyltransferase TrmD family. As to quaternary structure, homodimer.

It localises to the cytoplasm. It carries out the reaction guanosine(37) in tRNA + S-adenosyl-L-methionine = N(1)-methylguanosine(37) in tRNA + S-adenosyl-L-homocysteine + H(+). Functionally, specifically methylates guanosine-37 in various tRNAs. The sequence is that of tRNA (guanine-N(1)-)-methyltransferase from Clostridium kluyveri (strain NBRC 12016).